The primary structure comprises 519 residues: U3 small nucleolar RNA-associated protein 15 homolog (519 aa).

At alanine 2 the chain carries N-acetylalanine. WD repeat units follow at residues 36–75 (KEFGAVSKVDFSPQPPYNYAVTASSRIHIYGRYSQEPIKT), 78–117 (RFKDTAYCATFRQDGRLLVAGSEDGGVQLFDISGRAPLRQ), 120–159 (GHTKAVHSVDFTADKYHVVSGADDYTVKLWDIPNSKEILT), 162–202 (EHSD…SVIS), 204–242 (EHGQPVESVLLFPSGGLLVSAGGRYVKVWDMLKGGQLLV), 246–285 (NHHKTVTCLCLSSSGQRLLSGSLDRKVKVYSTTSYKVVHS), and 287–326 (DYTASILSLALAHEDETIVVGMTNGILSVKHRKSEAKKDS). A Glycyl lysine isopeptide (Lys-Gly) (interchain with G-Cter in SUMO2) cross-link involves residue lysine 249.

Part of the small subunit (SSU) processome, composed of more than 70 proteins and the RNA chaperone small nucleolar RNA (snoRNA) U3. May be a component of the proposed t-UTP subcomplex of the ribosomal small subunit (SSU) processome containing at least UTP4, WDR43, HEATR1, UTP15, WDR75. Interacts directly with UTP4 and WDR43.

It localises to the nucleus. The protein localises to the nucleolus. Its function is as follows. Ribosome biogenesis factor. Involved in nucleolar processing of pre-18S ribosomal RNA. Required for optimal pre-ribosomal RNA transcription by RNA polymerase I. Part of the small subunit (SSU) processome, first precursor of the small eukaryotic ribosomal subunit. During the assembly of the SSU processome in the nucleolus, many ribosome biogenesis factors, an RNA chaperone and ribosomal proteins associate with the nascent pre-rRNA and work in concert to generate RNA folding, modifications, rearrangements and cleavage as well as targeted degradation of pre-ribosomal RNA by the RNA exosome. This is U3 small nucleolar RNA-associated protein 15 homolog from Bos taurus (Bovine).